The primary structure comprises 489 residues: MSLTNADETVTYDALIVGAGVIGPCVATALARKGKKVLIVEREWSQPDRIVGELMQPGGLRALRSLGMIQSINNIDAYPVTGYTVFYNGEHVDIPYPYKADLKPVEKLPGLVRDGNDKVLEDATVHKKDFEDDERERGVGLVHGRFLNNLRNICAAEPNVTRLQGNVVEILKDKKNEVVGAKVDVDSRGKVDFKAHLTFVCDGIFSRFRRELHPDHVPTVNSSFVGMSLYHAHMPHDMHGHVILGDKHMPILVYQISPEETRILCAYNAPKVPTDLKSWMTKDVQPYIPKTLRPSFDDALAQGKFKPMANSWLPARQNDVTGLCVIGDALNMRHPLTGGGMTVGLNDVVLLIKKIGDLDFSDREKVLDELLDYHFERKNYDAVVNVLSISLYSLFAADSKNLKALQKGCFKYFQRGGDCVNLPVAFLAGVLPKPLLLTRVFFAVAFYTIYLNMEERGFLGLPMALLEGIMILITAIKVFTPFLVRELIG.

A helical transmembrane segment spans residues 10–30 (VTYDALIVGAGVIGPCVATAL). FAD contacts are provided by residues 21 to 22 (VI), 41 to 42 (ER), Arg49, Arg151, Val167, Asp328, and Met341. Helical transmembrane passes span 426-446 (FLAGVLPKPLLLTRVFFAVAF) and 464-484 (ALLEGIMILITAIKVFTPFLV).

It belongs to the squalene monooxygenase family. It depends on FAD as a cofactor.

Its subcellular location is the microsome membrane. It localises to the endoplasmic reticulum membrane. It catalyses the reaction squalene + reduced [NADPH--hemoprotein reductase] + O2 = (S)-2,3-epoxysqualene + oxidized [NADPH--hemoprotein reductase] + H2O + H(+). It functions in the pathway terpene metabolism; lanosterol biosynthesis; lanosterol from farnesyl diphosphate: step 2/3. In terms of biological role, catalyzes the stereospecific oxidation of squalene to (S)-2,3-epoxysqualene, and is considered to be a rate-limiting enzyme in steroid biosynthesis. The sequence is that of Squalene monooxygenase (ERG1) from Candida glabrata (strain ATCC 2001 / BCRC 20586 / JCM 3761 / NBRC 0622 / NRRL Y-65 / CBS 138) (Yeast).